The chain runs to 599 residues: Sulfite reductase [NADPH] flavoprotein alpha-component (599 aa).

The Flavodoxin-like domain occupies 64–202 (VTLISASQTG…AASEWRARVV (139 aa)). Residues 70–75 (SQTGNA), 117–120 (STQG), and 153–162 (LGDTSYEFFC) contribute to the FMN site. In terms of domain architecture, FAD-binding FR-type spans 234–448 (DAPLIATLSV…IEHNDNFRLP (215 aa)). Residues threonine 322, alanine 356, 386–389 (RLYS), 404–406 (TVG), tyrosine 410, and 419–422 (GGAS) contribute to the FAD site. NADP(+)-binding positions include 519–520 (SR), 525–529 (KIYVQ), and aspartate 561. Tyrosine 599 provides a ligand contact to FAD.

The protein belongs to the NADPH-dependent sulphite reductase flavoprotein subunit CysJ family. In the N-terminal section; belongs to the flavodoxin family. It in the C-terminal section; belongs to the flavoprotein pyridine nucleotide cytochrome reductase family. Alpha(8)-beta(8). The alpha component is a flavoprotein, the beta component is a hemoprotein. It depends on FAD as a cofactor. FMN serves as cofactor.

It carries out the reaction hydrogen sulfide + 3 NADP(+) + 3 H2O = sulfite + 3 NADPH + 4 H(+). It participates in sulfur metabolism; hydrogen sulfide biosynthesis; hydrogen sulfide from sulfite (NADPH route): step 1/1. Functionally, component of the sulfite reductase complex that catalyzes the 6-electron reduction of sulfite to sulfide. This is one of several activities required for the biosynthesis of L-cysteine from sulfate. The flavoprotein component catalyzes the electron flow from NADPH -&gt; FAD -&gt; FMN to the hemoprotein component. This Salmonella typhimurium (strain LT2 / SGSC1412 / ATCC 700720) protein is Sulfite reductase [NADPH] flavoprotein alpha-component.